The chain runs to 155 residues: Small ribosomal subunit protein uS7c (155 aa).

The protein belongs to the universal ribosomal protein uS7 family. In terms of assembly, part of the 30S ribosomal subunit.

The protein resides in the plastid. The protein localises to the chloroplast. Its function is as follows. One of the primary rRNA binding proteins, it binds directly to 16S rRNA where it nucleates assembly of the head domain of the 30S subunit. The protein is Small ribosomal subunit protein uS7c (rps7) of Schisandra chinensis (Chinese magnolia vine).